Consider the following 472-residue polypeptide: Glutamate--tRNA ligase 1 (472 aa).

The 'HIGH' region signature appears at 13-23 (PSPTGYLHIGG). Zn(2+) is bound by residues Cys-102, Cys-104, Cys-129, and Glu-131. Positions 239–243 (RLSKR) match the 'KMSKS' region motif. Residue Lys-242 participates in ATP binding.

It belongs to the class-I aminoacyl-tRNA synthetase family. Glutamate--tRNA ligase type 1 subfamily. As to quaternary structure, monomer. It depends on Zn(2+) as a cofactor.

The protein resides in the cytoplasm. The catalysed reaction is tRNA(Glu) + L-glutamate + ATP = L-glutamyl-tRNA(Glu) + AMP + diphosphate. Functionally, catalyzes the attachment of glutamate to tRNA(Glu) in a two-step reaction: glutamate is first activated by ATP to form Glu-AMP and then transferred to the acceptor end of tRNA(Glu). The sequence is that of Glutamate--tRNA ligase 1 from Syntrophus aciditrophicus (strain SB).